We begin with the raw amino-acid sequence, 195 residues long: ATP-dependent Clp protease proteolytic subunit 3 (195 aa).

The Nucleophile role is filled by serine 97. The active site involves histidine 122.

Belongs to the peptidase S14 family. As to quaternary structure, fourteen ClpP subunits assemble into 2 heptameric rings which stack back to back to give a disk-like structure with a central cavity, resembling the structure of eukaryotic proteasomes.

The protein resides in the cytoplasm. The catalysed reaction is Hydrolysis of proteins to small peptides in the presence of ATP and magnesium. alpha-casein is the usual test substrate. In the absence of ATP, only oligopeptides shorter than five residues are hydrolyzed (such as succinyl-Leu-Tyr-|-NHMec, and Leu-Tyr-Leu-|-Tyr-Trp, in which cleavage of the -Tyr-|-Leu- and -Tyr-|-Trp bonds also occurs).. Functionally, cleaves peptides in various proteins in a process that requires ATP hydrolysis. Has a chymotrypsin-like activity. Plays a major role in the degradation of misfolded proteins. In Rhizobium meliloti (strain 1021) (Ensifer meliloti), this protein is ATP-dependent Clp protease proteolytic subunit 3.